The chain runs to 371 residues: Ferrochelatase (371 aa).

Residues histidine 218 and glutamate 299 each coordinate Fe cation.

It belongs to the ferrochelatase family.

It is found in the cytoplasm. The catalysed reaction is heme b + 2 H(+) = protoporphyrin IX + Fe(2+). The protein operates within porphyrin-containing compound metabolism; protoheme biosynthesis; protoheme from protoporphyrin-IX: step 1/1. Its function is as follows. Catalyzes the ferrous insertion into protoporphyrin IX. In Ralstonia pickettii (strain 12J), this protein is Ferrochelatase.